Reading from the N-terminus, the 206-residue chain is Large ribosomal subunit protein uL4 (206 aa).

The segment at 47-75 (GTQSAKTRAEVSGGGIKPWRQKGTGRARQ) is disordered.

It belongs to the universal ribosomal protein uL4 family. In terms of assembly, part of the 50S ribosomal subunit.

In terms of biological role, one of the primary rRNA binding proteins, this protein initially binds near the 5'-end of the 23S rRNA. It is important during the early stages of 50S assembly. It makes multiple contacts with different domains of the 23S rRNA in the assembled 50S subunit and ribosome. Its function is as follows. Forms part of the polypeptide exit tunnel. The protein is Large ribosomal subunit protein uL4 of Clostridium botulinum (strain 657 / Type Ba4).